Here is a 267-residue protein sequence, read N- to C-terminus: Ribosomal RNA small subunit methyltransferase J (267 aa).

S-adenosyl-L-methionine is bound by residues 133-134 (ER) and aspartate 187.

The protein belongs to the methyltransferase superfamily. RsmJ family.

It is found in the cytoplasm. The enzyme catalyses guanosine(1516) in 16S rRNA + S-adenosyl-L-methionine = N(2)-methylguanosine(1516) in 16S rRNA + S-adenosyl-L-homocysteine + H(+). Functionally, specifically methylates the guanosine in position 1516 of 16S rRNA. The sequence is that of Ribosomal RNA small subunit methyltransferase J from Halorhodospira halophila (strain DSM 244 / SL1) (Ectothiorhodospira halophila (strain DSM 244 / SL1)).